The chain runs to 447 residues: Glutamate-1-semialdehyde 2,1-aminomutase (447 aa).

Lys-277 bears the N6-(pyridoxal phosphate)lysine mark.

This sequence belongs to the class-III pyridoxal-phosphate-dependent aminotransferase family. HemL subfamily. In terms of assembly, homodimer. Pyridoxal 5'-phosphate is required as a cofactor.

The protein resides in the cytoplasm. The catalysed reaction is (S)-4-amino-5-oxopentanoate = 5-aminolevulinate. It participates in porphyrin-containing compound metabolism; protoporphyrin-IX biosynthesis; 5-aminolevulinate from L-glutamyl-tRNA(Glu): step 2/2. This Arthrobacter sp. (strain FB24) protein is Glutamate-1-semialdehyde 2,1-aminomutase.